The primary structure comprises 497 residues: Glycerol kinase 2 (497 aa).

Thr13 contributes to the ADP binding site. ATP contacts are provided by Thr13, Thr14, and Ser15. Thr13 provides a ligand contact to sn-glycerol 3-phosphate. An ADP-binding site is contributed by Arg17. Sn-glycerol 3-phosphate-binding residues include Arg83, Glu84, Tyr134, and Asp241. 5 residues coordinate glycerol: Arg83, Glu84, Tyr134, Asp241, and Gln242. ADP is bound by residues Thr263 and Gly305. The ATP site is built by Thr263, Gly305, Gln309, and Gly406. 2 residues coordinate ADP: Gly406 and Asn410.

Belongs to the FGGY kinase family.

It catalyses the reaction glycerol + ATP = sn-glycerol 3-phosphate + ADP + H(+). The protein operates within polyol metabolism; glycerol degradation via glycerol kinase pathway; sn-glycerol 3-phosphate from glycerol: step 1/1. Key enzyme in the regulation of glycerol uptake and metabolism. Catalyzes the phosphorylation of glycerol to yield sn-glycerol 3-phosphate. This chain is Glycerol kinase 2, found in Sulfolobus acidocaldarius (strain ATCC 33909 / DSM 639 / JCM 8929 / NBRC 15157 / NCIMB 11770).